Consider the following 551-residue polypeptide: Gliomedin (551 aa).

Over 1–17 (MARGAEGGRGDAGWGLR) the chain is Cytoplasmic. The helical; Signal-anchor for type II membrane protein transmembrane segment at 18–39 (GALAAVALLSALNAAGTVFALC) threads the bilayer. Residues 40–551 (QWRGLSSALR…VQFLSTTLNQ (512 aa)) are Extracellular-facing. The disordered stretch occupies residues 72–107 (LSRAPRGASAPPQDPASSARNKRSHSGEPAPHIRAE). Residues 79–90 (ASAPPQDPASSA) are compositionally biased toward low complexity. The N-linked (GlcNAc...) asparagine glycan is linked to Asn-130. Collagen-like domains lie at 137-195 (LTGP…RGEK) and 196-222 (GDHG…KGDV). The tract at residues 139–282 (GPSGPPGPPG…GETCAIPNDD (144 aa)) is disordered. Composition is skewed to basic and acidic residues over residues 191-200 (ERGEKGDHGE) and 213-222 (KGEKGDKGDV). The segment covering 237-253 (PPGPPGPPGPPGPPGPP) has biased composition (pro residues). The Olfactomedin-like domain occupies 299-546 (QAESMITSIG…LMLYPVQFLS (248 aa)). N-linked (GlcNAc...) asparagine glycosylation is found at Asn-329, Asn-357, Asn-378, and Asn-464.

As to quaternary structure, homotrimer (via collagen-like domains). Interacts with NRCAM and NFASC/neurofascin. Interaction with glial NRCAM enhances interaction with axonal NFASC. Interacts with MYOC. Post-translationally, N-glycosylated. Proteolytic processing by a furin-like protease causes shedding of the ectodomain. Further cleavage by BMP1 releases the olfactomedin-like domain. As to expression, specifically expressed in spinal cord, brain, placenta and sciatic nerve. More abundant in peripheral than central nervous system.

It localises to the cell membrane. It is found in the cell projection. Its subcellular location is the axon. The protein localises to the secreted. The protein resides in the extracellular space. It localises to the extracellular matrix. Its function is as follows. Ligand for NRCAM and NFASC/neurofascin that plays a role in the formation and maintenance of the nodes of Ranvier on myelinated axons. Mediates interaction between Schwann cell microvilli and axons via its interactions with NRCAM and NFASC. Nodes of Ranvier contain clustered sodium channels that are crucial for the saltatory propagation of action potentials along myelinated axons. During development, nodes of Ranvier are formed by the fusion of two heminodes. Required for normal clustering of sodium channels at heminodes; not required for the formation of mature nodes with normal sodium channel clusters. Required, together with NRCAM, for maintaining NFASC and sodium channel clusters at mature nodes of Ranvier. This is Gliomedin (GLDN) from Homo sapiens (Human).